A 146-amino-acid polypeptide reads, in one-letter code: uncharacterized protein (146 aa).

This is an uncharacterized protein from Orgyia pseudotsugata (Douglas-fir tussock moth).